The following is a 641-amino-acid chain: MLNNLNQPKGSTIGVLKDGRTIQQAIDGLENPVHYVKDVSITPSALLAVAVEAARLGRTVEFGPGHYTNQGQPFEVDFPLNLDVPVGTFLDFPIIIRGKTVKTVRSVATNLTAAQCPAGTTVIAGDFSAFPVGSVVGVKLGDNTNGSASYNNEAGWDFTTVAAASNTSITLSTGLRWAFDKPEVFTPEYAVRYSGQLSRSSYFIPGDYTSGLNVGDIIRVENIDGTDGVHGNKEYFEMLKVSSIDSSGITVETRLRYTHVNPWIVKTGLVKGSSVTGGGRLKRLEVRGVDTPKVNNVDVDRLIVGLCYNIDVGEITSRGVGEPSSVNFTFCFGRGFLYNVRASGSVSTTDNSALKLMSCPGLIINNCSPHNSTSTGSQGDYGFYVDAYYSPYWCWNDGMSINGIVTETPRSAVTRALWLFGLRGCSVSNLSGAQVFLQGCAKSVFSNIVTPDNLLELRDLSGCIVSGMANNALVLGCWNSTFDLTLFGIGSGSNLNIALRAGAGVTHPETGVPTTLGKNNTFNVKSFSQSSLAVTLSIAQQERPIFGAGCVDVDSANKSVALGSNVIVPTMLPLALTKGIDSGSGWVGGRTKGGIWFDGNYRDAAVRWNGQYVWVADNGSLKAAPTKPDSDSPSNGVVIGP.

In the N-terminal section; belongs to the Przondovirus depolymerase 2 family. In terms of assembly, homotrimer. Interacts (via N-terminus) with depolymerase 1 (via N-terminus); this interaction probably gives rise to a branched tailspike.

It is found in the virion. Functionally, functions as a receptor binding protein (RBP) and probably mediates the attachment to the host capsular exopolysaccharides. Displays a depolymerase activity that specifically degrades some K47-type polysaccharides of Klebsiella pneumoniae capsule, which allows the phage to reach the host cell membrane and bind the entry receptor. The protein is Depolymerase 1, capsule K47-specific of Klebsiella pneumoniae (Bacteriophage vB_KpnP_IME205).